Reading from the N-terminus, the 299-residue chain is tRNA dimethylallyltransferase (299 aa).

An ATP-binding site is contributed by 10-17 (GPTASGKS). 12–17 (TASGKS) is a substrate binding site.

This sequence belongs to the IPP transferase family. In terms of assembly, monomer. The cofactor is Mg(2+).

It carries out the reaction adenosine(37) in tRNA + dimethylallyl diphosphate = N(6)-dimethylallyladenosine(37) in tRNA + diphosphate. Its function is as follows. Catalyzes the transfer of a dimethylallyl group onto the adenine at position 37 in tRNAs that read codons beginning with uridine, leading to the formation of N6-(dimethylallyl)adenosine (i(6)A). The polypeptide is tRNA dimethylallyltransferase (Malacoplasma penetrans (strain HF-2) (Mycoplasma penetrans)).